The primary structure comprises 599 residues: Sulfite reductase [NADPH] flavoprotein alpha-component (599 aa).

A Flavodoxin-like domain is found at 64–202 (ITIISASQTG…AASEWRARVV (139 aa)). FMN is bound by residues 70 to 75 (SQTGNA), 117 to 120 (STQG), and 153 to 162 (LGDSSYEFFC). Residues 234–448 (DAPLVASLSV…IEHNDNFRLP (215 aa)) form the FAD-binding FR-type domain. Residues T322, A356, 386–389 (RLYS), 404–406 (TVG), Y410, and 419–422 (GGAS) each bind FAD. NADP(+) is bound by residues 519–520 (SR), 525–529 (KVYVQ), and D561. Y599 contributes to the FAD binding site.

The protein belongs to the NADPH-dependent sulphite reductase flavoprotein subunit CysJ family. This sequence in the N-terminal section; belongs to the flavodoxin family. In the C-terminal section; belongs to the flavoprotein pyridine nucleotide cytochrome reductase family. Alpha(8)-beta(8). The alpha component is a flavoprotein, the beta component is a hemoprotein. It depends on FAD as a cofactor. Requires FMN as cofactor.

It carries out the reaction hydrogen sulfide + 3 NADP(+) + 3 H2O = sulfite + 3 NADPH + 4 H(+). The protein operates within sulfur metabolism; hydrogen sulfide biosynthesis; hydrogen sulfide from sulfite (NADPH route): step 1/1. Component of the sulfite reductase complex that catalyzes the 6-electron reduction of sulfite to sulfide. This is one of several activities required for the biosynthesis of L-cysteine from sulfate. The flavoprotein component catalyzes the electron flow from NADPH -&gt; FAD -&gt; FMN to the hemoprotein component. The protein is Sulfite reductase [NADPH] flavoprotein alpha-component of Escherichia coli O157:H7.